A 290-amino-acid chain; its full sequence is MYTPMHNKFQNRFQLANLTHSHSFSHSWLLAISGGQDSLCLLKFMHDLVHHHLVVVHFDHRWSCSLAALRVYYLSRYMHLAWRYFRTALPITTEQDARQYRYANLIQLLYQTHSHAICTAHTASDDLETYLDQWISLRHPEGIWRLCHLSGSQILFRPLLHLTRAQTHWFTLVHYLPIWSDVSNYQITFKRNQLRHQLIPFLKNLNPRFHTTLSARLSARILSPLIVYPWHVWSSLPIWLQYQIATQWGLTLSQIQQLIYNNKYELARSSSINRFSFCDSSRSYHFNLAL.

33 to 38 (SGGQDS) serves as a coordination point for ATP.

The protein belongs to the tRNA(Ile)-lysidine synthase family.

It is found in the plastid. The protein resides in the chloroplast. The catalysed reaction is cytidine(34) in tRNA(Ile2) + L-lysine + ATP = lysidine(34) in tRNA(Ile2) + AMP + diphosphate + H(+). Functionally, ligates lysine onto the cytidine present at position 34 of the AUA codon-specific tRNA(Ile) that contains the anticodon CAU, in an ATP-dependent manner. Cytidine is converted to lysidine, thus changing the amino acid specificity of the tRNA from methionine to isoleucine. The chain is tRNA(Ile)-lysidine synthase, chloroplastic from Cyanidioschyzon merolae (strain NIES-3377 / 10D) (Unicellular red alga).